The sequence spans 116 residues: Protein Wnt-5(III) (116 aa).

A lipid anchor (O-palmitoleoyl serine; by PORCN) is attached at Ser1. Asn69 is a glycosylation site (N-linked (GlcNAc...) asparagine). The cysteines at positions 82 and 97 are disulfide-linked.

The protein belongs to the Wnt family. In terms of processing, palmitoleoylation is required for efficient binding to frizzled receptors. Depalmitoleoylation leads to Wnt signaling pathway inhibition.

It localises to the secreted. The protein resides in the extracellular space. The protein localises to the extracellular matrix. Functionally, ligand for members of the frizzled family of seven transmembrane receptors. Probable developmental protein. May be a signaling molecule which affects the development of discrete regions of tissues. Is likely to signal over only few cell diameters. In Eptatretus stoutii (Pacific hagfish), this protein is Protein Wnt-5(III) (WNT-5(III)).